The sequence spans 513 residues: L-arabinose transport ATP-binding protein AraG (513 aa).

ABC transporter domains lie at 6–243 (LEMR…GMVG) and 264–508 (VKNW…TKTA). 38-45 (GENGAGKS) serves as a coordination point for ATP.

This sequence belongs to the ABC transporter superfamily.

Its subcellular location is the cell membrane. It carries out the reaction L-arabinose(out) + ATP + H2O = L-arabinose(in) + ADP + phosphate + H(+). In terms of biological role, part of the binding-protein-dependent transport system for L-arabinose. Probably responsible for energy coupling to the transport system. This chain is L-arabinose transport ATP-binding protein AraG (araG), found in Geobacillus stearothermophilus (Bacillus stearothermophilus).